We begin with the raw amino-acid sequence, 357 residues long: Cobalt-precorrin-5B C(1)-methyltransferase (357 aa).

The protein belongs to the CbiD family.

The enzyme catalyses Co-precorrin-5B + S-adenosyl-L-methionine = Co-precorrin-6A + S-adenosyl-L-homocysteine. Its pathway is cofactor biosynthesis; adenosylcobalamin biosynthesis; cob(II)yrinate a,c-diamide from sirohydrochlorin (anaerobic route): step 6/10. Functionally, catalyzes the methylation of C-1 in cobalt-precorrin-5B to form cobalt-precorrin-6A. The protein is Cobalt-precorrin-5B C(1)-methyltransferase of Paramagnetospirillum magneticum (strain ATCC 700264 / AMB-1) (Magnetospirillum magneticum).